Reading from the N-terminus, the 1722-residue chain is Leucine-rich repeat- and IQ domain-containing protein 1 (1722 aa).

Disordered stretches follow at residues 23-47, 182-202, 265-285, and 319-367; these read SLEKEDIESDAKSETQSDDSDTDSV, EDKEKQTLKAQRDREEKQFQE, RTRFKDQQEKEKNSLLKQQNN, and QEWK…YEEK. Residues 38–47 are compositionally biased toward acidic residues; sequence QSDDSDTDSV. The segment covering 265 to 278 has biased composition (basic and acidic residues); that stretch reads RTRFKDQQEKEKNS. One can recognise an IQ 1 domain in the interval 283–312; sequence QNNAAVKIQAKYKAFVAYQKYGPIIKEQIE. LRR repeat units lie at residues 819 to 840, 841 to 861, 862 to 883, 884 to 905, 970 to 991, 992 to 1013, 1014 to 1035, 1036 to 1057, 1060 to 1081, and 1082 to 1103; these read NLQFLSLRRCGLTSLHSLSNCK, KLKYIDAQENHIEAIECENLE, NLCVVLLNKNQLTSLHGLDGCT, NIQCLELSYNKITRIGYSFFLE, NLQQLILDHNQLINTKGLCDTP, TIVYLDCSHNHLTDVEGVENCG, LLQILKLQGNYLSELPSLENLV, LLRELHLDDNSISTVEAFSSYW, LLQNITISQNSLTKIVPLFHFV, and SLEKLDVSHNCLSDLKSAIKWF. One can recognise an LRRCT domain in the interval 1117-1157; sequence NPLLQETNWRDSLLKVLPALRILNGNILNSNSESRTEEHNQ. 2 consecutive IQ domains span residues 1335–1364 and 1395–1424; these read KIMAAVVIQSYWRGYLMRRQTHFSTRLHTA and REKAAILIQAVWKGFILRKKLTTALEAIKN. Polar residues predominate over residues 1506 to 1524; that stretch reads SEHTQFNSRSENKTSSWTP. Residues 1506–1534 form a disordered region; that stretch reads SEHTQFNSRSENKTSSWTPESKTSRKSLL.

The protein is Leucine-rich repeat- and IQ domain-containing protein 1 (LRRIQ1) of Homo sapiens (Human).